A 430-amino-acid chain; its full sequence is Serine hydroxymethyltransferase (430 aa).

Position 120–122 (120–122 (GHI)) interacts with (6S)-5,6,7,8-tetrahydrofolate. Lysine 226 is modified (N6-(pyridoxal phosphate)lysine).

This sequence belongs to the SHMT family. As to quaternary structure, homodimer. The cofactor is pyridoxal 5'-phosphate.

The protein localises to the cytoplasm. It functions in the pathway amino-acid biosynthesis; glycine biosynthesis; glycine from L-serine: step 1/1. Catalyzes the reversible interconversion of serine and glycine with a modified folate serving as the one-carbon carrier. Also exhibits a pteridine-independent aldolase activity toward beta-hydroxyamino acids, producing glycine and aldehydes, via a retro-aldol mechanism. The sequence is that of Serine hydroxymethyltransferase from Pyrobaculum islandicum (strain DSM 4184 / JCM 9189 / GEO3).